Reading from the N-terminus, the 202-residue chain is Pyrrolidone-carboxylate peptidase (202 aa).

Active-site residues include glutamate 78, cysteine 141, and histidine 165.

Belongs to the peptidase C15 family. In terms of assembly, homotetramer.

Its subcellular location is the cytoplasm. The enzyme catalyses Release of an N-terminal pyroglutamyl group from a polypeptide, the second amino acid generally not being Pro.. Its function is as follows. Removes 5-oxoproline from various penultimate amino acid residues except L-proline. The protein is Pyrrolidone-carboxylate peptidase of Thermosipho melanesiensis (strain DSM 12029 / CIP 104789 / BI429).